A 137-amino-acid chain; its full sequence is Ribonuclease VapC51 (137 aa).

Positions tyrosine 5–alanine 120 constitute a PINc domain. Mg(2+) is bound by residues aspartate 8 and aspartate 95.

The protein belongs to the PINc/VapC protein family. Mg(2+) is required as a cofactor.

In terms of biological role, toxic component of a type II toxin-antitoxin (TA) system. An RNase. Its cognate antitoxin is VapB51. This Mycobacterium tuberculosis (strain ATCC 25618 / H37Rv) protein is Ribonuclease VapC51.